We begin with the raw amino-acid sequence, 393 residues long: uncharacterized protein (393 aa).

The next 8 helical transmembrane spans lie at 15–35 (IVAFSFFLVFLIVISVIVTIF), 56–76 (WGWIFVVILGFLVSVLWNVII), 86–106 (FYASWWEWLLFGFVVQFFQIV), 131–151 (AVLIVTSTGAFWNLSQALITW), 176–196 (LSLTGMIFDVVVAILFIVIAF), 253–273 (LLANMVVAIVSYFSLFGVFMI), 289–309 (LIDLFNITNIAVTASNFIPVA), and 349–369 (VYLPAIFTGICFVVWIVQVIW).

It is found in the cell membrane. This is an uncharacterized protein from Mycoplasma genitalium (strain ATCC 33530 / DSM 19775 / NCTC 10195 / G37) (Mycoplasmoides genitalium).